The primary structure comprises 357 residues: Protein ATP1B4 (357 aa).

Residues 1–110 (MRRQLRSRRA…FLARTGQSWS (110 aa)) are Nuclear-facing. A disordered region spans residues 15 to 80 (YSYRYRLDDP…EEGQGQPTGN (66 aa)). The span at 52 to 73 (EEEEEEEEKEEEEEEEKEEEEG) shows a compositional bias: acidic residues. A helical; Signal-anchor for type II membrane protein membrane pass occupies residues 111-131 (LILLIYFFFYASLAAVITLCM). Topologically, residues 132-357 (YTLFLTISPY…RVIFTLNIET (226 aa)) are perinuclear space.

The protein belongs to the X(+)/potassium ATPases subunit beta family. As to quaternary structure, associates with a SMAD7-transcriptional complex. Interacts with SNW1 and TOR1AIP1. According to PubMed:17592128, does not associate with known Na,K-ATPase alpha-subunits. In terms of tissue distribution, highly expressed in skeletal muscle and at a lower level in heart.

It localises to the nucleus inner membrane. May act as a transcriptional coregulator during muscle development through its interaction with SNW1. Has lost its ancestral function as a Na,K-ATPase beta-subunit. The polypeptide is Protein ATP1B4 (ATP1B4) (Homo sapiens (Human)).